We begin with the raw amino-acid sequence, 134 residues long: Retinoid-binding protein 7 (134 aa).

This sequence belongs to the calycin superfamily. Fatty-acid binding protein (FABP) family. As to expression, highly expressed in white adipose tissue and mammary gland.

Its subcellular location is the cytoplasm. Intracellular transport of retinol. The protein is Retinoid-binding protein 7 (Rbp7) of Mus musculus (Mouse).